Reading from the N-terminus, the 220-residue chain is Cytidylate kinase (220 aa).

9–17 (GPAASGKST) lines the ATP pocket.

Belongs to the cytidylate kinase family. Type 1 subfamily.

Its subcellular location is the cytoplasm. It catalyses the reaction CMP + ATP = CDP + ADP. The catalysed reaction is dCMP + ATP = dCDP + ADP. This is Cytidylate kinase from Thermotoga maritima (strain ATCC 43589 / DSM 3109 / JCM 10099 / NBRC 100826 / MSB8).